Consider the following 511-residue polypeptide: GMP synthase [glutamine-hydrolyzing] (511 aa).

The region spanning 5–195 (DIIVLDFGSQ…AKYICDCEST (191 aa)) is the Glutamine amidotransferase type-1 domain. Cys-82 serves as the catalytic Nucleophile. Active-site residues include His-169 and Glu-171. In terms of domain architecture, GMPS ATP-PPase spans 196–386 (WNMGNFAKIK…LGLSPDLVYR (191 aa)). ATP is bound at residue 223 to 229 (SGGVDSS).

Homodimer.

It carries out the reaction XMP + L-glutamine + ATP + H2O = GMP + L-glutamate + AMP + diphosphate + 2 H(+). It participates in purine metabolism; GMP biosynthesis; GMP from XMP (L-Gln route): step 1/1. Catalyzes the synthesis of GMP from XMP. This is GMP synthase [glutamine-hydrolyzing] from Campylobacter hominis (strain ATCC BAA-381 / DSM 21671 / CCUG 45161 / LMG 19568 / NCTC 13146 / CH001A).